Here is a 140-residue protein sequence, read N- to C-terminus: Large ribosomal subunit protein uL11 (140 aa).

Belongs to the universal ribosomal protein uL11 family. In terms of assembly, part of the ribosomal stalk of the 50S ribosomal subunit. Interacts with L10 and the large rRNA to form the base of the stalk. L10 forms an elongated spine to which L12 dimers bind in a sequential fashion forming a multimeric L10(L12)X complex. One or more lysine residues are methylated.

In terms of biological role, forms part of the ribosomal stalk which helps the ribosome interact with GTP-bound translation factors. The sequence is that of Large ribosomal subunit protein uL11 from Dehalococcoides mccartyi (strain CBDB1).